We begin with the raw amino-acid sequence, 381 residues long: MAPHPTLKATFAARSETATHPLTAYLFKLMDLKASNLCLSADVPTARELLYLADKIGPSIVVLKTHYDMVSGWTSHPETGTGAQLASLARKHGFLIFEDRKFGDIGHTVELQYTGGSARIIDWAHIVNVNMVPGKASVASLAQGAKRWLERYPCEVKTSVTVGTPTMDSFDDDADSRDAEPAGAVNGMGSIGVLDKPIYSNRSGDGRKGSIVSITTVTQQYESVSSPRLTKAIAEGDESLFPGIEEAPLSRGLLILAQMSSQGNFMNKEYTQASVEAAREHKDFVMGFISQETLNTEPDDAFIHMTPGCQLPPEDEDQQTNGSVGGDGQGQQYNTPHKLIGIAGSDIAIVGRGILKASDPVEEAERYRSAAWKAYTERLLR.

Residues D42, 64–66 (KTH), 99–108 (DRKFGDIGHT), Y333, and R352 each bind substrate. K101 acts as the Proton donor in catalysis. Positions 311 to 333 (LPPEDEDQQTNGSVGGDGQGQQY) are disordered.

It belongs to the OMP decarboxylase family.

It carries out the reaction orotidine 5'-phosphate + H(+) = UMP + CO2. The protein operates within pyrimidine metabolism; UMP biosynthesis via de novo pathway; UMP from orotate: step 2/2. This Hypocrea jecorina (Trichoderma reesei) protein is Orotidine 5'-phosphate decarboxylase (ura3).